A 166-amino-acid polypeptide reads, in one-letter code: Deglycase TK1284 (166 aa).

The PfpI endopeptidase domain maps to Met-1–Arg-166. The active site involves His-101.

The protein belongs to the peptidase C56 family. In terms of assembly, homohexamer formed by a dimer of trimers that assemble into a hollow ring structure.

It is found in the cytoplasm. It carries out the reaction N(omega)-(1-hydroxy-2-oxopropyl)-L-arginyl-[protein] + H2O = lactate + L-arginyl-[protein] + H(+). It catalyses the reaction N(6)-(1-hydroxy-2-oxopropyl)-L-lysyl-[protein] + H2O = lactate + L-lysyl-[protein] + H(+). The catalysed reaction is S-(1-hydroxy-2-oxopropyl)-L-cysteinyl-[protein] + H2O = lactate + L-cysteinyl-[protein] + H(+). The enzyme catalyses N(omega)-(1-hydroxy-2-oxoethyl)-L-arginyl-[protein] + H2O = L-arginyl-[protein] + glycolate + H(+). It carries out the reaction N(6)-(1-hydroxy-2-oxoethyl)-L-lysyl-[protein] + H2O = glycolate + L-lysyl-[protein] + H(+). It catalyses the reaction S-(1-hydroxy-2-oxoethyl)-L-cysteinyl-[protein] + H2O = glycolate + L-cysteinyl-[protein] + H(+). Deglycase that catalyzes the deglycation of the Maillard adducts formed between amino groups of proteins and reactive carbonyl groups of glyoxals. Thus, functions as a protein deglycase that repairs methylglyoxal- and glyoxal-glycated proteins, and releases repaired proteins and lactate or glycolate, respectively. Deglycates cysteine, arginine and lysine residues in proteins, and thus reactivates these proteins by reversing glycation by glyoxals. Acts on early glycation intermediates (hemithioacetals and aminocarbinols), preventing the formation of advanced glycation endproducts (AGE) that cause irreversible damage. Also displays proteolytic activity. In Thermococcus kodakarensis (strain ATCC BAA-918 / JCM 12380 / KOD1) (Pyrococcus kodakaraensis (strain KOD1)), this protein is Deglycase TK1284.